Here is a 324-residue protein sequence, read N- to C-terminus: NADH-ubiquinone oxidoreductase chain 1 (324 aa).

Transmembrane regions (helical) follow at residues 10-30, 76-96, 107-127, 143-163, 178-198, 229-249, 260-280, and 300-320; these read MIMT…LTLV, FLFI…WTPL, LGLL…LWSG, VAQT…TIML, PMYL…STLA, LFFL…ITLF, ELFS…FLWI, and FLPL…SYAG.

This sequence belongs to the complex I subunit 1 family.

It is found in the mitochondrion inner membrane. The enzyme catalyses a ubiquinone + NADH + 5 H(+)(in) = a ubiquinol + NAD(+) + 4 H(+)(out). Core subunit of the mitochondrial membrane respiratory chain NADH dehydrogenase (Complex I) that is believed to belong to the minimal assembly required for catalysis. Complex I functions in the transfer of electrons from NADH to the respiratory chain. The immediate electron acceptor for the enzyme is believed to be ubiquinone. The sequence is that of NADH-ubiquinone oxidoreductase chain 1 (MT-ND1) from Coturnix japonica (Japanese quail).